The sequence spans 874 residues: Trimodular acetylaranotin synthesis protein ataIMG (874 aa).

The tract at residues 1–339 is aminotransferase ataI; that stretch reads MANLSGLSNR…DSGLLRASSI (339 aa). Positions 20–39 are disordered; the sequence is RFGFQTTQQAKPTESSKTPI. Residues 23-37 show a composition bias toward polar residues; sequence FQTTQQAKPTESSKT. The interval 340 to 668 is O-methyltransferase ataM; sequence SYNSMVKGSS…QERTEAEWRT (329 aa). Position 625 (D625) interacts with S-adenosyl-L-methionine. A glutathione S-transferase ataG region spans residues 669 to 874; that stretch reads LAGRTGWEIR…VMEMGPQIGH (206 aa). The 68-residue stretch at 699-766 folds into the GST N-terminal domain; that stretch reads KPLILAHELE…YLADRFDDGT (68 aa). A GST C-terminal domain is found at 739-874; it reads DPETKAEVIV…VMEMGPQIGH (136 aa).

This sequence in the N-terminal section; belongs to the class-I pyridoxal-phosphate-dependent aminotransferase family. The protein in the 2nd section; belongs to the class I-like SAM-binding methyltransferase superfamily. Cation-independent O-methyltransferase family. In the C-terminal section; belongs to the GST superfamily. Pyridoxal 5'-phosphate is required as a cofactor.

It carries out the reaction RX + glutathione = an S-substituted glutathione + a halide anion + H(+). The protein operates within mycotoxin biosynthesis. Functionally, trimodular acetylaranotin synthesis protein; part of the gene cluster that mediates the biosynthesis of acetylaranotin, a member of the epipolythiodioxopiperazine (ETP) class of toxins characterized by a disulfide-bridged cyclic dipeptide. The first step of acetylaranotin biosynthesis is performed by the NRPS ataP which produces diketopiperazine cyclo-L-Phe-L-Phe via the condensation of 2 phenylalanines (L-Phe). The ataC domain of ataTC then catalyzes the formation of bishydroxylation of cyclo-L-Phe-L-Phe. The glutathione S-transferase domain ataG in ataIMG further catalyzes the conjugation of two glutathiones to the bishydroxylated intermediate. Next, the dipeptidase ataJ removes the Glu residues. The following step is performed by the carbon sulfur lyase domain ataI of ataIMG which may convert the bis-cysteinyl adduct to yield an epidithiol intermediate. The ataT domain from ataTC then catalyzes the oxidation of the free dithiols, followed by a cyclization step catalyzed by the cytochrome P450 ataF. AtaF probably acts as an epoxidase to promote a dual epoxidation formation at C8 and C9 along with C8' and C9', followed by the spontaneous nucleophilic attack of the amide nitrogens N10 and N10' to yield an intermediate with the pyrrolidine partial structure. The final steps of acetylaranotin biosynthesis involve the acetylation and ring rearrangement of an epitetrathiodiketopiperazine intermediate to produce acetylaranotin. AtaH probably catalyzes the acetylation of epitetrathiodiketopiperazine to produce a diacetate and ataY is responsible for the formation of the dihydrooxepin moiety that converts the diacetate intermediate to acetylaranotin via acetylapoaranotin. Both enzymes could function independently in the absence of the other. The acetylaranotin bis-thiomethyltransferase ataS located outside of acetylaranotin gene cluster is the main thiomethyltransferase responsible for converting acetylaranotin and its related intermediates to their methylated forms. The polypeptide is Trimodular acetylaranotin synthesis protein ataIMG (Aspergillus terreus (strain NIH 2624 / FGSC A1156)).